The chain runs to 116 residues: Large ribosomal subunit protein uL18 (116 aa).

The protein belongs to the universal ribosomal protein uL18 family. As to quaternary structure, part of the 50S ribosomal subunit; part of the 5S rRNA/L5/L18/L25 subcomplex. Contacts the 5S and 23S rRNAs.

This is one of the proteins that bind and probably mediate the attachment of the 5S RNA into the large ribosomal subunit, where it forms part of the central protuberance. This is Large ribosomal subunit protein uL18 from Shewanella putrefaciens (strain CN-32 / ATCC BAA-453).